The sequence spans 869 residues: Bifunctional uridylyltransferase/uridylyl-removing enzyme (869 aa).

Positions 1-332 (MTDAPAERPD…QFDGEATPES (332 aa)) are uridylyltransferase. Residues 333 to 691 (LGGGFSLRRG…RRAVPDNDAL (359 aa)) form a uridylyl-removing region. In terms of domain architecture, HD spans 450 to 572 (VDQHTLMVLR…VGTRERLDYL (123 aa)). ACT domains follow at residues 692 to 774 (EVFV…RAVP) and 798 to 869 (RISL…LDPV).

Belongs to the GlnD family. Requires Mg(2+) as cofactor.

The enzyme catalyses [protein-PII]-L-tyrosine + UTP = [protein-PII]-uridylyl-L-tyrosine + diphosphate. It carries out the reaction [protein-PII]-uridylyl-L-tyrosine + H2O = [protein-PII]-L-tyrosine + UMP + H(+). Its activity is regulated as follows. Uridylyltransferase (UTase) activity is inhibited by glutamine, while glutamine activates uridylyl-removing (UR) activity. Its function is as follows. Modifies, by uridylylation and deuridylylation, the PII regulatory proteins (GlnB and homologs), in response to the nitrogen status of the cell that GlnD senses through the glutamine level. Under low glutamine levels, catalyzes the conversion of the PII proteins and UTP to PII-UMP and PPi, while under higher glutamine levels, GlnD hydrolyzes PII-UMP to PII and UMP (deuridylylation). Thus, controls uridylylation state and activity of the PII proteins, and plays an important role in the regulation of nitrogen assimilation and metabolism. The sequence is that of Bifunctional uridylyltransferase/uridylyl-removing enzyme from Xanthomonas oryzae pv. oryzae (strain MAFF 311018).